We begin with the raw amino-acid sequence, 653 residues long: Fructose-1,6-bisphosphatase class 3 2 (653 aa).

It belongs to the FBPase class 3 family. Mn(2+) is required as a cofactor.

The enzyme catalyses beta-D-fructose 1,6-bisphosphate + H2O = beta-D-fructose 6-phosphate + phosphate. The protein operates within carbohydrate biosynthesis; gluconeogenesis. The polypeptide is Fructose-1,6-bisphosphatase class 3 2 (Clostridium beijerinckii (strain ATCC 51743 / NCIMB 8052) (Clostridium acetobutylicum)).